The sequence spans 454 residues: UDP-N-acetylmuramate--L-alanine ligase (454 aa).

112–118 (GTHGKTT) provides a ligand contact to ATP.

The protein belongs to the MurCDEF family.

The protein resides in the cytoplasm. The catalysed reaction is UDP-N-acetyl-alpha-D-muramate + L-alanine + ATP = UDP-N-acetyl-alpha-D-muramoyl-L-alanine + ADP + phosphate + H(+). Its pathway is cell wall biogenesis; peptidoglycan biosynthesis. In terms of biological role, cell wall formation. This Nitratidesulfovibrio vulgaris (strain ATCC 29579 / DSM 644 / CCUG 34227 / NCIMB 8303 / VKM B-1760 / Hildenborough) (Desulfovibrio vulgaris) protein is UDP-N-acetylmuramate--L-alanine ligase.